Consider the following 568-residue polypeptide: 2-succinyl-5-enolpyruvyl-6-hydroxy-3-cyclohexene-1-carboxylate synthase (568 aa).

Belongs to the TPP enzyme family. MenD subfamily. Homodimer. Mg(2+) is required as a cofactor. Requires Mn(2+) as cofactor. Thiamine diphosphate serves as cofactor.

It catalyses the reaction isochorismate + 2-oxoglutarate + H(+) = 5-enolpyruvoyl-6-hydroxy-2-succinyl-cyclohex-3-ene-1-carboxylate + CO2. The protein operates within quinol/quinone metabolism; 1,4-dihydroxy-2-naphthoate biosynthesis; 1,4-dihydroxy-2-naphthoate from chorismate: step 2/7. It functions in the pathway quinol/quinone metabolism; menaquinone biosynthesis. Its function is as follows. Catalyzes the thiamine diphosphate-dependent decarboxylation of 2-oxoglutarate and the subsequent addition of the resulting succinic semialdehyde-thiamine pyrophosphate anion to isochorismate to yield 2-succinyl-5-enolpyruvyl-6-hydroxy-3-cyclohexene-1-carboxylate (SEPHCHC). The chain is 2-succinyl-5-enolpyruvyl-6-hydroxy-3-cyclohexene-1-carboxylate synthase from Haemophilus influenzae (strain ATCC 51907 / DSM 11121 / KW20 / Rd).